The following is a 208-amino-acid chain: Pyridoxine/pyridoxamine 5'-phosphate oxidase (208 aa).

FMN-binding positions include 55 to 60, 70 to 71, Lys-76, Lys-77, and Gln-99; these read RMVLLK and YT. Lys-60 is a binding site for substrate. Residues Tyr-117, Arg-121, and Ser-125 each coordinate substrate. Residues 134–135 and Trp-179 each bind FMN; that span reads QS. 185–187 contacts substrate; the sequence is RLH. Arg-189 contributes to the FMN binding site.

Belongs to the pyridoxamine 5'-phosphate oxidase family. In terms of assembly, homodimer. The cofactor is FMN.

It catalyses the reaction pyridoxamine 5'-phosphate + O2 + H2O = pyridoxal 5'-phosphate + H2O2 + NH4(+). The catalysed reaction is pyridoxine 5'-phosphate + O2 = pyridoxal 5'-phosphate + H2O2. Its pathway is cofactor metabolism; pyridoxal 5'-phosphate salvage; pyridoxal 5'-phosphate from pyridoxamine 5'-phosphate: step 1/1. It participates in cofactor metabolism; pyridoxal 5'-phosphate salvage; pyridoxal 5'-phosphate from pyridoxine 5'-phosphate: step 1/1. Its function is as follows. Catalyzes the oxidation of either pyridoxine 5'-phosphate (PNP) or pyridoxamine 5'-phosphate (PMP) into pyridoxal 5'-phosphate (PLP). This chain is Pyridoxine/pyridoxamine 5'-phosphate oxidase, found in Brucella ovis (strain ATCC 25840 / 63/290 / NCTC 10512).